A 211-amino-acid polypeptide reads, in one-letter code: Superoxide dismutase [Mn] (211 aa).

Residues histidine 27, histidine 82, aspartate 165, and histidine 169 each coordinate Mn(2+).

The protein belongs to the iron/manganese superoxide dismutase family. Homodimer. Requires Mn(2+) as cofactor.

The catalysed reaction is 2 superoxide + 2 H(+) = H2O2 + O2. Functionally, destroys superoxide anion radicals which are normally produced within the cells and which are toxic to biological systems. The sequence is that of Superoxide dismutase [Mn] (sodA) from Bordetella pertussis (strain Tohama I / ATCC BAA-589 / NCTC 13251).